The following is a 370-amino-acid chain: MTEKINLLNLSEPELQGFIASQGQPLYRATQLLQWIHQRGVTDFSLMTDLSKPFRQQLSEASFVRVPELALERVSADGTHKWLFRLADNNKIETVFIPDRKRGTLCVSSQVGCALNCSFCATGKEGFNRNLTLAEIIGQVWLAARLLKSPYKITNVVMMGMGEPLLNYEAVVAAMHLMMHDHAYGLSKYRVTLSTSGVIPAMRRLREESPVSLAVSLHAPNDALRNVLIPLNKKYSLDQLIPLCRDYYSRGSKRCVTFEYVMIEGMNDRLIDAKQLIRLLADVPCKINLIPFNSFQGTAYRCSTESAISVFQKCLMDAGFNTRVRRTRGDDIAGACGQLAGQFHDRTGRHQRWVQKQGHDFNRPIPAIDH.

Glutamate 93 (proton acceptor) is an active-site residue. In terms of domain architecture, Radical SAM core spans 99 to 331 (DRKRGTLCVS…TRVRRTRGDD (233 aa)). Cysteine 106 and cysteine 336 are joined by a disulfide. Residues cysteine 113, cysteine 117, and cysteine 120 each coordinate [4Fe-4S] cluster. S-adenosyl-L-methionine-binding positions include 162 to 163 (GE), serine 194, 216 to 218 (SLH), and asparagine 293. Cysteine 336 serves as the catalytic S-methylcysteine intermediate.

The protein belongs to the radical SAM superfamily. RlmN family. [4Fe-4S] cluster is required as a cofactor.

It is found in the cytoplasm. It carries out the reaction adenosine(2503) in 23S rRNA + 2 reduced [2Fe-2S]-[ferredoxin] + 2 S-adenosyl-L-methionine = 2-methyladenosine(2503) in 23S rRNA + 5'-deoxyadenosine + L-methionine + 2 oxidized [2Fe-2S]-[ferredoxin] + S-adenosyl-L-homocysteine. The catalysed reaction is adenosine(37) in tRNA + 2 reduced [2Fe-2S]-[ferredoxin] + 2 S-adenosyl-L-methionine = 2-methyladenosine(37) in tRNA + 5'-deoxyadenosine + L-methionine + 2 oxidized [2Fe-2S]-[ferredoxin] + S-adenosyl-L-homocysteine. Functionally, specifically methylates position 2 of adenine 2503 in 23S rRNA and position 2 of adenine 37 in tRNAs. m2A2503 modification seems to play a crucial role in the proofreading step occurring at the peptidyl transferase center and thus would serve to optimize ribosomal fidelity. The polypeptide is Dual-specificity RNA methyltransferase RlmN (Coxiella burnetii (strain RSA 493 / Nine Mile phase I)).